The following is a 161-amino-acid chain: Nucleotide-binding protein Bcep18194_A5887 (161 aa).

It belongs to the YajQ family.

Functionally, nucleotide-binding protein. This is Nucleotide-binding protein Bcep18194_A5887 from Burkholderia lata (strain ATCC 17760 / DSM 23089 / LMG 22485 / NCIMB 9086 / R18194 / 383).